We begin with the raw amino-acid sequence, 1009 residues long: Epididymis-specific alpha-mannosidase (1009 aa).

An N-terminal signal peptide occupies residues 1-23 (MGQLCWLPLLAPLLLLRPPGVQS). Positions 36, 38, and 151 each coordinate Zn(2+). Asp151 (nucleophile) is an active-site residue. Asn226, Asn249, Asn294, and Asn336 each carry an N-linked (GlcNAc...) asparagine glycan. A Zn(2+)-binding site is contributed by His420. N-linked (GlcNAc...) asparagine glycosylation is found at Asn516, Asn608, Asn670, Asn675, Asn748, Asn808, Asn812, and Asn890. Residues 972 to 991 (GPGRHRGDTTSPSRPPGGPI) form a disordered region.

The protein belongs to the glycosyl hydrolase 38 family. Zn(2+) is required as a cofactor.

The protein localises to the secreted. It carries out the reaction Hydrolysis of terminal, non-reducing alpha-D-mannose residues in alpha-D-mannosides.. This chain is Epididymis-specific alpha-mannosidase (MAN2B2), found in Homo sapiens (Human).